The chain runs to 244 residues: Gas vesicle protein F (244 aa).

Residues 1-109 (MTVGLYLYGI…QLKELFAKLS (109 aa)) form an N-terminus region. Residues 110-233 (GQREVSIKIF…GDRLRIRYNN (124 aa)) form a C-terminus, modifed ferredoxin fold region. The interval 234-244 (LTAPYTFAQLI) is C-tail.

This sequence belongs to the gas vesicle GvpF/GvpL family. Binds GvpA.

Its subcellular location is the gas vesicle. A minor component of the gas vesicle, may be involved in preventing GvpA aggregation during gas vesicle nucleation. Gas vesicles (GV) are hollow, gas filled proteinaceous nanostructures. During planktonic growth they allow positioning of the organism at a favorable depth for light or nutrient acquisition. This chain is Gas vesicle protein F, found in Microcystis aeruginosa (strain PCC 7806).